The sequence spans 377 residues: Peroxisomal membrane protein PEX14 (377 aa).

Positions 1–20 are enriched in low complexity; that stretch reads MASSEQAEQPSQPSSSPGSE. The disordered stretch occupies residues 1–23; sequence MASSEQAEQPSQPSSSPGSENVV. An N-acetylalanine modification is found at alanine 2. At 2–108 the chain is on the peroxisomal side; sequence ASSEQAEQPS…CSPGSSRWRD (107 aa). N6-acetyllysine is present on lysine 34. Residues 109–126 traverse the membrane as a helical segment; the sequence is YGALAIIMAGIAFGFHQL. At 127–377 the chain is on the cytoplasmic side; it reads YKKYLLPLIL…EGASNESERH (251 aa). The interval 230–377 is disordered; the sequence is PPSPSAPKIP…EGASNESERH (148 aa). Residue serine 232 is modified to Phosphoserine. Low complexity-rich tracts occupy residues 244–259 and 265–275; these read PVKS…VNHH and SPVSNESTSSS. Phosphoserine is present on residues serine 282 and serine 335. Residues 323-342 show a composition bias toward acidic residues; the sequence is KEEEEEEEEEDVSHVDEEDV. Over residues 360–377 the composition is skewed to basic and acidic residues; that stretch reads QVDKLRRPEGASNESERH.

This sequence belongs to the peroxin-14 family. As to quaternary structure, interacts with PEX13; forming the PEX13-PEX14 docking complex. Interacts with PEX5 (via WxxxF/Y motifs). Interacts with PEX19. Interacts with tubulin.

The protein localises to the peroxisome membrane. Functionally, component of the PEX13-PEX14 docking complex, a translocon channel that specifically mediates the import of peroxisomal cargo proteins bound to PEX5 receptor. The PEX13-PEX14 docking complex forms a large import pore which can be opened to a diameter of about 9 nm. Mechanistically, PEX5 receptor along with cargo proteins associates with the PEX14 subunit of the PEX13-PEX14 docking complex in the cytosol, leading to the insertion of the receptor into the organelle membrane with the concomitant translocation of the cargo into the peroxisome matrix. Plays a key role for peroxisome movement through a direct interaction with tubulin. The polypeptide is Peroxisomal membrane protein PEX14 (Cricetulus longicaudatus (Long-tailed dwarf hamster)).